A 111-amino-acid chain; its full sequence is Putative FAD-linked sulfhydryl oxidase 347L (111 aa).

Positions 2–109 (TDIDPHIWGP…LPESVARKKW (108 aa)) constitute an ERV/ALR sulfhydryl oxidase domain. A disulfide bond links cysteine 49 and cysteine 52.

This sequence belongs to the IIV-6 347L family. FAD is required as a cofactor.

The catalysed reaction is 2 R'C(R)SH + O2 = R'C(R)S-S(R)CR' + H2O2. FAD-dependent sulfhydryl oxidase that catalyzes disulfide bond formation. The chain is Putative FAD-linked sulfhydryl oxidase 347L from Invertebrate iridescent virus 6 (IIV-6).